Consider the following 372-residue polypeptide: Glutamate 5-kinase (372 aa).

Residue Lys-14 participates in ATP binding. Residues Ser-54, Asp-141, and Asn-153 each contribute to the substrate site. Residue 173–174 (TD) coordinates ATP. The 79-residue stretch at 280-358 (RGRVIIDAGA…SEIESVLGHL (79 aa)) folds into the PUA domain.

It belongs to the glutamate 5-kinase family.

The protein localises to the cytoplasm. The catalysed reaction is L-glutamate + ATP = L-glutamyl 5-phosphate + ADP. It participates in amino-acid biosynthesis; L-proline biosynthesis; L-glutamate 5-semialdehyde from L-glutamate: step 1/2. Functionally, catalyzes the transfer of a phosphate group to glutamate to form L-glutamate 5-phosphate. This is Glutamate 5-kinase from Cupriavidus metallidurans (strain ATCC 43123 / DSM 2839 / NBRC 102507 / CH34) (Ralstonia metallidurans).